Reading from the N-terminus, the 239-residue chain is Pyridoxine 5'-phosphate synthase (239 aa).

Asparagine 7 is a binding site for 3-amino-2-oxopropyl phosphate. A 1-deoxy-D-xylulose 5-phosphate-binding site is contributed by aspartate 9–histidine 10. A 3-amino-2-oxopropyl phosphate-binding site is contributed by arginine 18. The Proton acceptor role is filled by histidine 43. 1-deoxy-D-xylulose 5-phosphate is bound by residues arginine 45 and histidine 50. Residue glutamate 70 is the Proton acceptor of the active site. Threonine 100 is a 1-deoxy-D-xylulose 5-phosphate binding site. The Proton donor role is filled by histidine 191. 3-amino-2-oxopropyl phosphate contacts are provided by residues glycine 192 and glycine 213–histidine 214.

It belongs to the PNP synthase family. As to quaternary structure, homooctamer; tetramer of dimers.

The protein resides in the cytoplasm. The enzyme catalyses 3-amino-2-oxopropyl phosphate + 1-deoxy-D-xylulose 5-phosphate = pyridoxine 5'-phosphate + phosphate + 2 H2O + H(+). The protein operates within cofactor biosynthesis; pyridoxine 5'-phosphate biosynthesis; pyridoxine 5'-phosphate from D-erythrose 4-phosphate: step 5/5. Catalyzes the complicated ring closure reaction between the two acyclic compounds 1-deoxy-D-xylulose-5-phosphate (DXP) and 3-amino-2-oxopropyl phosphate (1-amino-acetone-3-phosphate or AAP) to form pyridoxine 5'-phosphate (PNP) and inorganic phosphate. The sequence is that of Pyridoxine 5'-phosphate synthase from Trichlorobacter lovleyi (strain ATCC BAA-1151 / DSM 17278 / SZ) (Geobacter lovleyi).